The chain runs to 51 residues: MKQQKAMLIALIVICLTVIVTALVTRKDLCEVRIRTGQTEVAVFTAYEPEE.

Residues 5–25 (KAMLIALIVICLTVIVTALVT) form a helical membrane-spanning segment.

It belongs to the Hok/Gef family.

Its subcellular location is the cell inner membrane. Functionally, toxic component of a type I toxin-antitoxin (TA) system. When overexpressed kills cells within minutes; causes collapse of the transmembrane potential and arrest of respiration. Its toxic effect is probably neutralized by an antisense antitoxin Sok RNA. This is Protein HokD (hokD) from Escherichia coli O157:H7.